A 427-amino-acid chain; its full sequence is Serine--tRNA ligase (427 aa).

231 to 233 serves as a coordination point for L-serine; it reads TAE. 262-264 serves as a coordination point for ATP; the sequence is RSE. L-serine is bound at residue glutamate 285. 349-352 is an ATP binding site; it reads EISS. Serine 385 is a binding site for L-serine.

It belongs to the class-II aminoacyl-tRNA synthetase family. Type-1 seryl-tRNA synthetase subfamily. As to quaternary structure, homodimer. The tRNA molecule binds across the dimer.

It is found in the cytoplasm. The enzyme catalyses tRNA(Ser) + L-serine + ATP = L-seryl-tRNA(Ser) + AMP + diphosphate + H(+). It carries out the reaction tRNA(Sec) + L-serine + ATP = L-seryl-tRNA(Sec) + AMP + diphosphate + H(+). Its pathway is aminoacyl-tRNA biosynthesis; selenocysteinyl-tRNA(Sec) biosynthesis; L-seryl-tRNA(Sec) from L-serine and tRNA(Sec): step 1/1. In terms of biological role, catalyzes the attachment of serine to tRNA(Ser). Is also able to aminoacylate tRNA(Sec) with serine, to form the misacylated tRNA L-seryl-tRNA(Sec), which will be further converted into selenocysteinyl-tRNA(Sec). The protein is Serine--tRNA ligase of Allorhizobium ampelinum (strain ATCC BAA-846 / DSM 112012 / S4) (Agrobacterium vitis (strain S4)).